The primary structure comprises 111 residues: Small ribosomal subunit protein bS16 (111 aa).

The segment at Met92 to Ala111 is disordered.

Belongs to the bacterial ribosomal protein bS16 family.

In Rickettsia massiliae (strain Mtu5), this protein is Small ribosomal subunit protein bS16.